The sequence spans 81 residues: Pyruvate synthase subunit PorD (81 aa).

The interval 1-20 is disordered; it reads MESLGATVKEPGSTRKNKTG. 2 consecutive 4Fe-4S ferredoxin-type domains span residues 25–54 and 51–80; these read FKPF…KEHE and KEHE…MERE. Residues cysteine 34, cysteine 37, cysteine 40, cysteine 44, cysteine 60, cysteine 63, cysteine 66, and cysteine 70 each coordinate [4Fe-4S] cluster.

Heterotetramer of one alpha, one beta, one delta and one gamma chain. It depends on [4Fe-4S] cluster as a cofactor.

The chain is Pyruvate synthase subunit PorD (porD) from Methanothermobacter marburgensis (strain ATCC BAA-927 / DSM 2133 / JCM 14651 / NBRC 100331 / OCM 82 / Marburg) (Methanobacterium thermoautotrophicum).